Reading from the N-terminus, the 68-residue chain is Beta-defensin 1 (68 aa).

The first 21 residues, 1–21, serve as a signal peptide directing secretion; that stretch reads MRTSYLLLFTLCLLLSEMASG. Residues 22–32 constitute a propeptide that is removed on maturation; the sequence is DNFLTGLGHRS. Cystine bridges form between Cys37–Cys66, Cys44–Cys59, and Cys49–Cys67.

Belongs to the beta-defensin family. As to quaternary structure, monomer. Homodimer.

It is found in the secreted. The protein localises to the membrane. Has bactericidal activity. May act as a ligand for C-C chemokine receptor CCR6. Positively regulates the sperm motility and bactericidal activity in a CCR6-dependent manner. Binds to CCR6 and triggers Ca2+ mobilization in the sperm which is important for its motility. This is Beta-defensin 1 (DEFB1) from Macaca mulatta (Rhesus macaque).